A 433-amino-acid polypeptide reads, in one-letter code: Signal recognition particle 54 kDa protein (433 aa).

GTP-binding positions include 106 to 113 (GVEGSGKT), 186 to 190 (DTAGR), and 244 to 247 (TKMD).

The protein belongs to the GTP-binding SRP family. SRP54 subfamily. In terms of assembly, part of the signal recognition particle protein translocation system, which is composed of SRP and FtsY. Archaeal SRP consists of a 7S RNA molecule of 300 nucleotides and two protein subunits: SRP54 and SRP19.

It localises to the cytoplasm. The catalysed reaction is GTP + H2O = GDP + phosphate + H(+). Involved in targeting and insertion of nascent membrane proteins into the cytoplasmic membrane. Binds to the hydrophobic signal sequence of the ribosome-nascent chain (RNC) as it emerges from the ribosomes. The SRP-RNC complex is then targeted to the cytoplasmic membrane where it interacts with the SRP receptor FtsY. The polypeptide is Signal recognition particle 54 kDa protein (Pyrobaculum neutrophilum (strain DSM 2338 / JCM 9278 / NBRC 100436 / V24Sta) (Thermoproteus neutrophilus)).